The chain runs to 252 residues: tRNA pseudouridine synthase A (252 aa).

Catalysis depends on aspartate 54, which acts as the Nucleophile. Tyrosine 112 is a binding site for substrate.

The protein belongs to the tRNA pseudouridine synthase TruA family. As to quaternary structure, homodimer.

It carries out the reaction uridine(38/39/40) in tRNA = pseudouridine(38/39/40) in tRNA. Formation of pseudouridine at positions 38, 39 and 40 in the anticodon stem and loop of transfer RNAs. The polypeptide is tRNA pseudouridine synthase A (Oenococcus oeni (strain ATCC BAA-331 / PSU-1)).